We begin with the raw amino-acid sequence, 517 residues long: Cytochrome P450 78A5 (517 aa).

A helical transmembrane segment spans residues 20–40 (AFASVSLIIATVAFLLSPGGL). Residue C459 participates in heme binding.

This sequence belongs to the cytochrome P450 family. Requires heme as cofactor. As to expression, expressed in the periphery of the shoot apical meristem and inflorescence meristem, on the adaxial sides of developing floral organs and in developing ovules in the region where the integuments emerge.

The protein localises to the membrane. In terms of biological role, plays a role in regulating directional growth at the meristem/organ boundary. Is required for the promotion of leaf and floral organ growth and for the prolongation of the plastochron. Promotes organ growth in a non-cell-autonomous manner and may generate a mobile growth signal distinct from the classical phytohormones that prevents premature arrest of proliferation, until the correct primordium size has been reached. Functions probably in association with CYP78A7 in regulating relative growth of the shoot apical meristem and plant organs. Is required locally in developing ovules to stimulates cell proliferation and promote seed growth. This is Cytochrome P450 78A5 (CYP78A5) from Arabidopsis thaliana (Mouse-ear cress).